The chain runs to 325 residues: N-acetyl-gamma-glutamyl-phosphate reductase (325 aa).

C131 is a catalytic residue.

It belongs to the NAGSA dehydrogenase family. Type 1 subfamily.

It is found in the cytoplasm. It carries out the reaction N-acetyl-L-glutamate 5-semialdehyde + phosphate + NADP(+) = N-acetyl-L-glutamyl 5-phosphate + NADPH + H(+). The protein operates within amino-acid biosynthesis; L-arginine biosynthesis; N(2)-acetyl-L-ornithine from L-glutamate: step 3/4. Functionally, catalyzes the NADPH-dependent reduction of N-acetyl-5-glutamyl phosphate to yield N-acetyl-L-glutamate 5-semialdehyde. The chain is N-acetyl-gamma-glutamyl-phosphate reductase from Methylobacterium sp. (strain 4-46).